Here is a 202-residue protein sequence, read N- to C-terminus: Adenylate kinase (202 aa).

12 to 20 is a binding site for ATP; the sequence is GVPGVGKTT.

The protein belongs to the archaeal adenylate kinase family.

It localises to the cytoplasm. It carries out the reaction AMP + ATP = 2 ADP. This Aeropyrum pernix (strain ATCC 700893 / DSM 11879 / JCM 9820 / NBRC 100138 / K1) protein is Adenylate kinase (adkA).